A 182-amino-acid polypeptide reads, in one-letter code: MSPIEQIYDKIPDFAKDVRINLTSLMADETLSPRRKYGVLVASAVATRNSALIAAVESAASGVMTSVAIAAAKAAASVVVMNNVYYRFVHLASNPEYKTMPPRLRMDVIGNPGVDKSDFELWSLAVSSINGCGICIDAHERTLRAAGVNSETIQTAVRFAAITQSVAIALEAAGPASPQAGD.

The active-site Proton donor is C132. C132 and C135 are joined by a disulfide. Residue C135 is the Cysteine sulfenic acid (-SOH) intermediate of the active site.

It belongs to the AhpD family.

It carries out the reaction N(6)-[(R)-dihydrolipoyl]-L-lysyl-[lipoyl-carrier protein] + a hydroperoxide = N(6)-[(R)-lipoyl]-L-lysyl-[lipoyl-carrier protein] + an alcohol + H2O. In terms of biological role, antioxidant protein with alkyl hydroperoxidase activity. Required for the reduction of the AhpC active site cysteine residues and for the regeneration of the AhpC enzyme activity. This chain is Alkyl hydroperoxide reductase AhpD, found in Bradyrhizobium diazoefficiens (strain JCM 10833 / BCRC 13528 / IAM 13628 / NBRC 14792 / USDA 110).